The following is a 143-amino-acid chain: MFMGEYQHTIDSKGRMIVPAKFREGLGEQFVLTRGLDQCLFGYPMSEWKLIEEKLKALPLTKKDARAFTRFFFSGATECELDKQGRINIASPLLNYAKLEKECVVIGVSNRIELWSKEIWEQYVEEQEDSFAEIAENMIGFDI.

SpoVT-AbrB domains are found at residues 5 to 47 and 76 to 119; these read EYQH…PMSE and ATEC…SKEI.

This sequence belongs to the MraZ family. Forms oligomers.

It is found in the cytoplasm. The protein resides in the nucleoid. The protein is Transcriptional regulator MraZ of Bacillus licheniformis (strain ATCC 14580 / DSM 13 / JCM 2505 / CCUG 7422 / NBRC 12200 / NCIMB 9375 / NCTC 10341 / NRRL NRS-1264 / Gibson 46).